A 245-amino-acid polypeptide reads, in one-letter code: Uridylate kinase (245 aa).

Position 12 to 15 (12 to 15) interacts with ATP; that stretch reads KISG. Gly-55 contacts UMP. 2 residues coordinate ATP: Gly-56 and Arg-60. UMP contacts are provided by residues Asp-76 and 137 to 144; that span reads AGAPYLTT. Positions 164, 171, and 174 each coordinate ATP.

This sequence belongs to the UMP kinase family. In terms of assembly, homohexamer.

It localises to the cytoplasm. The catalysed reaction is UMP + ATP = UDP + ADP. It participates in pyrimidine metabolism; CTP biosynthesis via de novo pathway; UDP from UMP (UMPK route): step 1/1. Its activity is regulated as follows. Inhibited by UTP. In terms of biological role, catalyzes the reversible phosphorylation of UMP to UDP. This is Uridylate kinase from Chlamydia trachomatis serovar A (strain ATCC VR-571B / DSM 19440 / HAR-13).